A 269-amino-acid chain; its full sequence is Ribosomal RNA small subunit methyltransferase J (269 aa).

S-adenosyl-L-methionine-binding positions include 124-125 and Asp188; that span reads ER.

It belongs to the methyltransferase superfamily. RsmJ family.

Its subcellular location is the cytoplasm. It carries out the reaction guanosine(1516) in 16S rRNA + S-adenosyl-L-methionine = N(2)-methylguanosine(1516) in 16S rRNA + S-adenosyl-L-homocysteine + H(+). In terms of biological role, specifically methylates the guanosine in position 1516 of 16S rRNA. This chain is Ribosomal RNA small subunit methyltransferase J, found in Saccharophagus degradans (strain 2-40 / ATCC 43961 / DSM 17024).